A 111-amino-acid polypeptide reads, in one-letter code: MAYAIIETGGKQLRVEPGRFYDVERLPIEPEGTIDLEQVLLVQTDSQVHVGQPYVSGAVVSGTVMEHRRGPKVIVYKMRPKKKTRRKKGHRQELTRIMINEIRLNGESLGG.

Belongs to the bacterial ribosomal protein bL21 family. As to quaternary structure, part of the 50S ribosomal subunit. Contacts protein L20.

This protein binds to 23S rRNA in the presence of protein L20. The sequence is that of Large ribosomal subunit protein bL21 from Thermosynechococcus vestitus (strain NIES-2133 / IAM M-273 / BP-1).